A 1203-amino-acid polypeptide reads, in one-letter code: Exonuclease/helicase subunit RexA (1203 aa).

The region spanning V4–R472 is the UvrD-like helicase ATP-binding domain. A25–T32 provides a ligand contact to ATP. The UvrD-like helicase C-terminal domain maps to V503 to G785.

This sequence belongs to the helicase family. AddA subfamily. Heterodimer of RexA (AddA) and RexB. Mg(2+) is required as a cofactor.

It carries out the reaction Couples ATP hydrolysis with the unwinding of duplex DNA by translocating in the 3'-5' direction.. The catalysed reaction is ATP + H2O = ADP + phosphate + H(+). Functionally, the heterodimer acts both as an ATP-dependent DNA helicase and an ATP-dependent, dual-direction single-stranded exonuclease. Recognizes the L.lactis chi site (5'-GCGCGTG-3'), which stimulates homologous recombination. The RexA (AddA) nuclease domain is required for chi fragment generation; this subunit has 3'-&gt;5' exonuclease activity and probably also performs the helicase function. This chain is Exonuclease/helicase subunit RexA, found in Lactococcus lactis subsp. cremoris (strain MG1363).